The sequence spans 156 residues: Small ribosomal subunit protein uS7 (156 aa).

It belongs to the universal ribosomal protein uS7 family. Part of the 30S ribosomal subunit. Contacts proteins S9 and S11.

In terms of biological role, one of the primary rRNA binding proteins, it binds directly to 16S rRNA where it nucleates assembly of the head domain of the 30S subunit. Is located at the subunit interface close to the decoding center, probably blocks exit of the E-site tRNA. This chain is Small ribosomal subunit protein uS7, found in Cronobacter sakazakii (strain ATCC BAA-894) (Enterobacter sakazakii).